The chain runs to 348 residues: Killer cell immunoglobulin-like receptor 2DL2 (348 aa).

The signal sequence occupies residues 1–21 (MSLMVVSMACVGFFLLQGAWP). At 22–245 (HEGVHRKPSL…SKTGNPRHLH (224 aa)) the chain is on the extracellular side. Ig-like C2-type domains follow at residues 42-107 (EETV…VTHS) and 142-205 (GESV…FRDS). 2 disulfides stabilise this stretch: Cys49–Cys100 and Cys149–Cys198. 3 N-linked (GlcNAc...) asparagine glycosylation sites follow: Asn84, Asn178, and Asn211. A helical transmembrane segment spans residues 246-264 (ILIGTSVVIILFILLFFLL). Residues 265-348 (HRWCSNKKNA…ESRSKVVSCP (84 aa)) lie on the Cytoplasmic side of the membrane.

Belongs to the immunoglobulin superfamily.

It is found in the cell membrane. Receptor on natural killer (NK) cells for HLA-Cw1, 3, 7, and 8 allotypes. Inhibits the activity of NK cells thus preventing cell lysis. In Homo sapiens (Human), this protein is Killer cell immunoglobulin-like receptor 2DL2.